Consider the following 64-residue polypeptide: Large ribosomal subunit protein bL35 (64 aa).

The segment at 1 to 41 is disordered; the sequence is MPKMKSHSGASKRFKVSGKGKLLRQQANRRHLLEHKPSRRT.

It belongs to the bacterial ribosomal protein bL35 family.

The polypeptide is Large ribosomal subunit protein bL35 (Nocardia farcinica (strain IFM 10152)).